The following is a 91-amino-acid chain: Bombyxin C-1 (91 aa).

A signal peptide spans 1 to 19; it reads MKLVMLLVVVSAMLVLGGA. Q20 carries the post-translational modification Pyrrolidone carboxylic acid. Disulfide bonds link C27-C76, C39-C89, and C75-C80. The propeptide at 47-67 is c peptide like; the sequence is SGSQYAGYGWPWLPPFSSSRG.

This sequence belongs to the insulin family. Heterodimer of a B chain and an A chain linked by two disulfide bonds.

It localises to the secreted. Functionally, brain peptide responsible for activation of prothoracic glands to produce ecdysone in insects. The polypeptide is Bombyxin C-1 (BBXC1) (Bombyx mori (Silk moth)).